We begin with the raw amino-acid sequence, 311 residues long: Methionyl-tRNA formyltransferase (311 aa).

110 to 113 (SLLP) is a binding site for (6S)-5,6,7,8-tetrahydrofolate.

It belongs to the Fmt family.

The catalysed reaction is L-methionyl-tRNA(fMet) + (6R)-10-formyltetrahydrofolate = N-formyl-L-methionyl-tRNA(fMet) + (6S)-5,6,7,8-tetrahydrofolate + H(+). Attaches a formyl group to the free amino group of methionyl-tRNA(fMet). The formyl group appears to play a dual role in the initiator identity of N-formylmethionyl-tRNA by promoting its recognition by IF2 and preventing the misappropriation of this tRNA by the elongation apparatus. The chain is Methionyl-tRNA formyltransferase from Streptococcus pyogenes serotype M1.